Here is a 561-residue protein sequence, read N- to C-terminus: 4-coumarate--CoA ligase 3 (561 aa).

ATP is bound by residues serine 213, serine 214, glycine 215, threonine 216, threonine 217, and lysine 221. 2 residues coordinate (E)-4-coumaroyl-AMP: tyrosine 263 and serine 267. Lysine 284 contacts CoA. Residues 286–355 are SBD1; the sequence is EIGALLDLIQ…RRLPQAILGQ (70 aa). Alanine 333, glutamine 355, glycine 356, threonine 360, and methionine 368 together coordinate (E)-4-coumaroyl-AMP. ATP is bound by residues glutamine 355, glycine 356, and threonine 360. An SBD2 region spans residues 356–423; the sequence is GYGMTEAGPV…IRGQQIMKEY (68 aa). ATP is bound by residues aspartate 444 and arginine 459. Residues lysine 461 and lysine 465 each coordinate (E)-4-coumaroyl-AMP. Residues lysine 467 and glycine 468 each coordinate CoA. ATP is bound at residue lysine 550.

This sequence belongs to the ATP-dependent AMP-binding enzyme family. The cofactor is Mg(2+). Preferentially expressed in leaves, flowers and siliques.

The catalysed reaction is (E)-4-coumarate + ATP + CoA = (E)-4-coumaroyl-CoA + AMP + diphosphate. It catalyses the reaction (E)-caffeate + ATP + CoA = (E)-caffeoyl-CoA + AMP + diphosphate. It carries out the reaction (E)-ferulate + ATP + CoA = (E)-feruloyl-CoA + AMP + diphosphate. The enzyme catalyses (E)-4-coumarate + ATP + H(+) = (E)-4-coumaroyl-AMP + diphosphate. The catalysed reaction is (E)-4-coumaroyl-AMP + CoA = (E)-4-coumaroyl-CoA + AMP + H(+). It catalyses the reaction (E)-caffeate + ATP + H(+) = (E)-caffeoyl-AMP + diphosphate. It carries out the reaction (E)-caffeoyl-AMP + CoA = (E)-caffeoyl-CoA + AMP + H(+). The enzyme catalyses (E)-ferulate + ATP + H(+) = (E)-feruloyl-AMP + diphosphate. The catalysed reaction is (E)-feruloyl-AMP + CoA = (E)-feruloyl-CoA + AMP + H(+). Its pathway is phytoalexin biosynthesis; 3,4',5-trihydroxystilbene biosynthesis; 3,4',5-trihydroxystilbene from trans-4-coumarate: step 1/2. Produces CoA thioesters of a variety of hydroxy- and methoxy-substituted cinnamic acids, which are used to synthesize several phenylpropanoid-derived compounds, including anthocyanins, flavonoids, isoflavonoids, coumarins, lignin, suberin and wall-bound phenolics. Follows a two-step reaction mechanism, wherein the carboxylate substrate first undergoes adenylation by ATP, followed by a thioesterification in the presence of CoA to yield the final CoA thioesters. The chain is 4-coumarate--CoA ligase 3 from Arabidopsis thaliana (Mouse-ear cress).